Consider the following 370-residue polypeptide: Cytochrome b (370 aa).

4 consecutive transmembrane segments (helical) span residues 25–45 (FGSM…FLAV), 69–90 (WMMQ…YIHI), 105–125 (WLSG…GYVL), and 170–190 (FFAL…LHIL). Heme b contacts are provided by His75 and His89. Residues His174 and His188 each contribute to the heme b site. Residue His193 participates in a ubiquinone binding. Helical transmembrane passes span 218–238 (YKDM…VSFF), 280–300 (LGGA…PFTH), 312–332 (LMQL…WTAT), and 339–358 (FTTI…ISNP).

This sequence belongs to the cytochrome b family. In terms of assembly, the cytochrome bc1 complex contains 3 respiratory subunits (MT-CYB, CYC1 and UQCRFS1), 2 core proteins (UQCRC1 and UQCRC2) and probably 6 low-molecular weight proteins. Requires heme b as cofactor.

The protein localises to the mitochondrion inner membrane. Its function is as follows. Component of the ubiquinol-cytochrome c reductase complex (complex III or cytochrome b-c1 complex) that is part of the mitochondrial respiratory chain. The b-c1 complex mediates electron transfer from ubiquinol to cytochrome c. Contributes to the generation of a proton gradient across the mitochondrial membrane that is then used for ATP synthesis. The sequence is that of Cytochrome b (MT-CYB) from Chilabothrus striatus (Haitian boa constrictor).